A 352-amino-acid chain; its full sequence is Anthranilate phosphoribosyltransferase (352 aa).

5-phospho-alpha-D-ribose 1-diphosphate-binding positions include Gly83, 86-87, Thr91, 93-96, 111-119, and Ala123; these read GD, NIST, and KHGGRSVSS. Anthranilate is bound at residue Gly83. Ser95 contacts Mg(2+). Residue Arg169 coordinates anthranilate. 2 residues coordinate Mg(2+): Asp228 and Glu229.

This sequence belongs to the anthranilate phosphoribosyltransferase family. In terms of assembly, homodimer. It depends on Mg(2+) as a cofactor.

It carries out the reaction N-(5-phospho-beta-D-ribosyl)anthranilate + diphosphate = 5-phospho-alpha-D-ribose 1-diphosphate + anthranilate. Its pathway is amino-acid biosynthesis; L-tryptophan biosynthesis; L-tryptophan from chorismate: step 2/5. Functionally, catalyzes the transfer of the phosphoribosyl group of 5-phosphorylribose-1-pyrophosphate (PRPP) to anthranilate to yield N-(5'-phosphoribosyl)-anthranilate (PRA). The sequence is that of Anthranilate phosphoribosyltransferase from Neisseria meningitidis serogroup C (strain 053442).